The primary structure comprises 462 residues: Bifunctional protein HldE (462 aa).

A ribokinase region spans residues 1-309 (MKPRILVLGD…EYERSIRKAP (309 aa)). ATP is bound at residue 186-189 (NKKE). The active site involves aspartate 254. Residues 336–462 (FTNGCFDILH…TAIVERMRSC (127 aa)) form a cytidylyltransferase region.

It in the N-terminal section; belongs to the carbohydrate kinase PfkB family. This sequence in the C-terminal section; belongs to the cytidylyltransferase family. In terms of assembly, homodimer.

The catalysed reaction is D-glycero-beta-D-manno-heptose 7-phosphate + ATP = D-glycero-beta-D-manno-heptose 1,7-bisphosphate + ADP + H(+). It carries out the reaction D-glycero-beta-D-manno-heptose 1-phosphate + ATP + H(+) = ADP-D-glycero-beta-D-manno-heptose + diphosphate. Its pathway is nucleotide-sugar biosynthesis; ADP-L-glycero-beta-D-manno-heptose biosynthesis; ADP-L-glycero-beta-D-manno-heptose from D-glycero-beta-D-manno-heptose 7-phosphate: step 1/4. It participates in nucleotide-sugar biosynthesis; ADP-L-glycero-beta-D-manno-heptose biosynthesis; ADP-L-glycero-beta-D-manno-heptose from D-glycero-beta-D-manno-heptose 7-phosphate: step 3/4. Catalyzes the phosphorylation of D-glycero-D-manno-heptose 7-phosphate at the C-1 position to selectively form D-glycero-beta-D-manno-heptose-1,7-bisphosphate. Functionally, catalyzes the ADP transfer from ATP to D-glycero-beta-D-manno-heptose 1-phosphate, yielding ADP-D-glycero-beta-D-manno-heptose. This chain is Bifunctional protein HldE, found in Nitratiruptor sp. (strain SB155-2).